Reading from the N-terminus, the 645-residue chain is Lipase 1 (645 aa).

The first 24 residues, 1 to 24 (MKRSFIFAPGMLALSISAISNAHA), serve as a signal peptide directing secretion. Catalysis depends on Ser34, which acts as the Nucleophile. Active-site residues include Asp327 and His330. One can recognise an Autotransporter domain in the interval 383–645 (NEQGKLGVFG…SFSLGVNASF (263 aa)).

This sequence belongs to the 'GDSL' lipolytic enzyme family.

The protein localises to the secreted. The catalysed reaction is a triacylglycerol + H2O = a diacylglycerol + a fatty acid + H(+). This is Lipase 1 (lip-1) from Photorhabdus luminescens (Xenorhabdus luminescens).